The sequence spans 134 residues: ATP synthase epsilon chain (134 aa).

The span at Ala-94–His-104 shows a compositional bias: basic and acidic residues. The interval Ala-94–Asn-115 is disordered.

This sequence belongs to the ATPase epsilon chain family. F-type ATPases have 2 components, CF(1) - the catalytic core - and CF(0) - the membrane proton channel. CF(1) has five subunits: alpha(3), beta(3), gamma(1), delta(1), epsilon(1). CF(0) has three main subunits: a, b and c.

The protein resides in the cell membrane. Functionally, produces ATP from ADP in the presence of a proton gradient across the membrane. In Staphylococcus epidermidis (strain ATCC 35984 / DSM 28319 / BCRC 17069 / CCUG 31568 / BM 3577 / RP62A), this protein is ATP synthase epsilon chain.